The following is a 404-amino-acid chain: S-adenosylmethionine synthase (404 aa).

ATP is bound at residue 139 to 144 (GKGSTD).

The protein belongs to the AdoMet synthase 2 family. It depends on Mg(2+) as a cofactor.

The enzyme catalyses L-methionine + ATP + H2O = S-adenosyl-L-methionine + phosphate + diphosphate. Its pathway is amino-acid biosynthesis; S-adenosyl-L-methionine biosynthesis; S-adenosyl-L-methionine from L-methionine: step 1/1. Catalyzes the formation of S-adenosylmethionine from methionine and ATP. The chain is S-adenosylmethionine synthase from Saccharolobus islandicus (strain L.S.2.15 / Lassen #1) (Sulfolobus islandicus).